Reading from the N-terminus, the 363-residue chain is tRNA/tmRNA (uracil-C(5))-methyltransferase (363 aa).

S-adenosyl-L-methionine is bound by residues Gln-187, Tyr-215, Asn-220, Glu-236, and Asp-296. The active-site Nucleophile is the Cys-321. The active-site Proton acceptor is the Glu-355.

Belongs to the class I-like SAM-binding methyltransferase superfamily. RNA M5U methyltransferase family. TrmA subfamily.

It catalyses the reaction uridine(54) in tRNA + S-adenosyl-L-methionine = 5-methyluridine(54) in tRNA + S-adenosyl-L-homocysteine + H(+). The catalysed reaction is uridine(341) in tmRNA + S-adenosyl-L-methionine = 5-methyluridine(341) in tmRNA + S-adenosyl-L-homocysteine + H(+). Dual-specificity methyltransferase that catalyzes the formation of 5-methyluridine at position 54 (m5U54) in all tRNAs, and that of position 341 (m5U341) in tmRNA (transfer-mRNA). The polypeptide is tRNA/tmRNA (uracil-C(5))-methyltransferase (Pseudomonas aeruginosa (strain ATCC 15692 / DSM 22644 / CIP 104116 / JCM 14847 / LMG 12228 / 1C / PRS 101 / PAO1)).